Reading from the N-terminus, the 596-residue chain is Histone deacetylase 9 (596 aa).

Composition is skewed to basic and acidic residues over residues 132-153 and 160-172; these read REKE…HRQE and RSKD…AVAS. Disordered regions lie at residues 132–172, 214–258, 293–313, and 522–596; these read REKE…AVAS, HTSL…VRSR, SSVS…GPVA, and QPEG…QQVT. Residues 172–222 are interaction with mef2; that stretch reads STEVKQKLQEFILSKSATKEPLTNGTSHSMGRHPKLWYTAAHHTSLDQSSP. Positions 221–237 are enriched in pro residues; the sequence is SPPPSGTSPTYKCPPPG. Positions 293–312 are enriched in low complexity; the sequence is SSVSSSSPVSGPSSPNNGPV. Residues 522-536 show a composition bias toward basic and acidic residues; the sequence is QPEGHLEEAEEDLHG. The segment covering 541–558 has biased composition (polar residues); that stretch reads QEKSSSIDNTRSYSSTDL. Residues 567–585 are compositionally biased toward basic and acidic residues; it reads KVKEEPPDSENEIKTHLQS. Positions 586–596 are enriched in polar residues; it reads EQKSVFAQQVT.

This sequence belongs to the histone deacetylase family. HD type 2 subfamily. Homodimer. Interacts with mef2. In terms of tissue distribution, broadly expressed.

Its subcellular location is the nucleus. It carries out the reaction N(6)-acetyl-L-lysyl-[histone] + H2O = L-lysyl-[histone] + acetate. Functionally, devoided of intrinsic deacetylase activity, promotes the deacetylation of lysine residues on the N-terminal part of the core histones (H2A, H2B, H3 and H4) by recruiting other histone deacetylases. Histone deacetylation gives a tag for epigenetic repression and plays an important role in transcriptional regulation, cell cycle progression and developmental events. Represses MEF2-dependent transcription. The chain is Histone deacetylase 9 (hdac9) from Xenopus laevis (African clawed frog).